A 359-amino-acid chain; its full sequence is Outer membrane protein P5 (359 aa).

A signal peptide spans 1–21 (MKKTAIALVVAGLAAASVAQA). A run of 8 beta stranded transmembrane segments spans residues 27 to 37 (TFYAGVKAGQG), 64 to 75 (TFTYGVFGGYQI), 83 to 91 (LAAELGYDD), 110 to 121 (HGAYLSLKGSYE), 126 to 134 (LDVYGKAGV), 164 to 173 (GLFAVGAEYA), 178 to 185 (LAVRLEYQ), and 211 to 219 (CINAGISYR). The OmpA-like domain maps to 233 to 359 (MVSKTFSLNS…RVEIAVNGTK (127 aa)). Cysteine 332 and cysteine 344 form a disulfide bridge.

This sequence belongs to the outer membrane OOP (TC 1.B.6) superfamily. OmpA family. In terms of assembly, monomer and homodimer.

Its subcellular location is the cell outer membrane. It is found in the fimbrium. Its function is as follows. Acts as a fimbriae subunit, allowing adhesion to host cells. Functionally, with TolR probably plays a role in maintaining the position of the peptidoglycan cell wall in the periplasm. Acts as a porin with low permeability that allows slow penetration of small solutes; an internal gate slows down solute passage. The polypeptide is Outer membrane protein P5 (Haemophilus influenzae).